Reading from the N-terminus, the 116-residue chain is uncharacterized protein (116 aa).

Residues Leu5–Phe23 traverse the membrane as a helical segment.

Its subcellular location is the membrane. This is an uncharacterized protein from Saccharomyces cerevisiae (strain ATCC 204508 / S288c) (Baker's yeast).